The sequence spans 382 residues: Flap endonuclease 1 (382 aa).

The N-domain stretch occupies residues 1 to 104; sequence MGILGLSKLI…GELAKRAERR (104 aa). Residue D34 coordinates Mg(2+). DNA contacts are provided by R47 and R70. D86 is a Mg(2+) binding site. The segment at 95–118 is disordered; sequence GELAKRAERREDAQKALEKATEAG. Residues 96 to 115 show a composition bias toward basic and acidic residues; sequence ELAKRAERREDAQKALEKAT. Residues 122-253 form an I-domain region; the sequence is DMDKFNRRLV…KRATELMNSY (132 aa). Mg(2+)-binding residues include E158, E160, D179, and D181. E158 is a binding site for DNA. DNA contacts are provided by G231 and D233. D233 is a binding site for Mg(2+). Positions 336 to 344 are interaction with PCNA; that stretch reads TQGRLDSFF. Residues 353-382 are disordered; sequence TTPKRKADDKNNVQQKKSKTAGNTKGKRPK. A compositionally biased stretch (polar residues) spans 364-375; the sequence is NVQQKKSKTAGN.

The protein belongs to the XPG/RAD2 endonuclease family. FEN1 subfamily. In terms of assembly, interacts with PCNA. Three molecules of FEN1 bind to one PCNA trimer with each molecule binding to one PCNA monomer. PCNA stimulates the nuclease activity without altering cleavage specificity. It depends on Mg(2+) as a cofactor. In terms of processing, phosphorylated. Phosphorylation upon DNA damage induces relocalization to the nuclear plasma.

Its subcellular location is the nucleus. The protein resides in the nucleolus. The protein localises to the nucleoplasm. It is found in the mitochondrion. In terms of biological role, structure-specific nuclease with 5'-flap endonuclease and 5'-3' exonuclease activities involved in DNA replication and repair. During DNA replication, cleaves the 5'-overhanging flap structure that is generated by displacement synthesis when DNA polymerase encounters the 5'-end of a downstream Okazaki fragment. It enters the flap from the 5'-end and then tracks to cleave the flap base, leaving a nick for ligation. Also involved in the long patch base excision repair (LP-BER) pathway, by cleaving within the apurinic/apyrimidinic (AP) site-terminated flap. Acts as a genome stabilization factor that prevents flaps from equilibrating into structures that lead to duplications and deletions. Also possesses 5'-3' exonuclease activity on nicked or gapped double-stranded DNA, and exhibits RNase H activity. Also involved in replication and repair of rDNA and in repairing mitochondrial DNA. The chain is Flap endonuclease 1 from Glossina morsitans morsitans (Savannah tsetse fly).